Reading from the N-terminus, the 381-residue chain is Fatty acid elongase 6 (381 aa).

Transmembrane regions (helical) follow at residues 10 to 30, 69 to 89, 107 to 127, 153 to 173, 182 to 202, 216 to 236, and 280 to 300; these read IAAA…LVYS, LPYL…SLIV, GLVH…GLMI, LIWL…IMLL, FLHV…LLVA, GVHV…SGIV, and LLQI…NFLV. Residues 184 to 188 carry the HxxHH motif motif; that stretch reads HVYHH. H187 acts as the Nucleophile in catalysis. A disordered region spans residues 362–381; the sequence is RKNGNGNGQKASLQAMAGSR.

The protein belongs to the ELO family.

The protein resides in the membrane. It functions in the pathway lipid metabolism; polyunsaturated fatty acid biosynthesis. Functionally, involved in the synthesis of fatty acids. Elongates C18 polyunsaturated fatty acids (PUFAs) with a preference for Delta6 PUFAs. In Leishmania major, this protein is Fatty acid elongase 6.